The chain runs to 787 residues: Endonuclease MutS2 (787 aa).

Gly-331 to Thr-338 contacts ATP. Residues Ile-711–Lys-786 form the Smr domain.

It belongs to the DNA mismatch repair MutS family. MutS2 subfamily. As to quaternary structure, homodimer. Binds to stalled ribosomes, contacting rRNA.

Its function is as follows. Endonuclease that is involved in the suppression of homologous recombination and thus may have a key role in the control of bacterial genetic diversity. Functionally, acts as a ribosome collision sensor, splitting the ribosome into its 2 subunits. Detects stalled/collided 70S ribosomes which it binds and splits by an ATP-hydrolysis driven conformational change. Acts upstream of the ribosome quality control system (RQC), a ribosome-associated complex that mediates the extraction of incompletely synthesized nascent chains from stalled ribosomes and their subsequent degradation. Probably generates substrates for RQC. This chain is Endonuclease MutS2, found in Caldicellulosiruptor bescii (strain ATCC BAA-1888 / DSM 6725 / KCTC 15123 / Z-1320) (Anaerocellum thermophilum).